Here is a 412-residue protein sequence, read N- to C-terminus: Alanyl-tRNA editing protein Aarsd1 (412 aa).

The Zn(2+) site is built by His-109 and His-113. Position 174 is a phosphoserine (Ser-174). Zn(2+) is bound by residues Cys-209 and His-213.

It belongs to the class-II aminoacyl-tRNA synthetase family. Alax-L subfamily. Zn(2+) is required as a cofactor.

Its subcellular location is the cytoplasm. Its function is as follows. Functions in trans to edit the amino acid moiety from incorrectly charged tRNA(Ala). The chain is Alanyl-tRNA editing protein Aarsd1 (AARSD1) from Homo sapiens (Human).